A 70-amino-acid chain; its full sequence is Small ribosomal subunit protein bS21 (70 aa).

Belongs to the bacterial ribosomal protein bS21 family.

This Herminiimonas arsenicoxydans protein is Small ribosomal subunit protein bS21.